A 165-amino-acid chain; its full sequence is Lipoprotein signal peptidase (165 aa).

Transmembrane regions (helical) follow at residues 10-30 (LKWLWLSILIMLLDIGTKYWV), 42-62 (VLPGINCYYVCNPGLAFGLFT), 71-91 (LFVWIITLVIVAFIIALYKLI), 105-125 (IGGALGNLLDRILYGAVVDFI), and 133-153 (HWPTFNVADIAICIGITIVTI). Catalysis depends on residues Asp-123 and Asp-141.

The protein belongs to the peptidase A8 family.

Its subcellular location is the cell inner membrane. The catalysed reaction is Release of signal peptides from bacterial membrane prolipoproteins. Hydrolyzes -Xaa-Yaa-Zaa-|-(S,diacylglyceryl)Cys-, in which Xaa is hydrophobic (preferably Leu), and Yaa (Ala or Ser) and Zaa (Gly or Ala) have small, neutral side chains.. The protein operates within protein modification; lipoprotein biosynthesis (signal peptide cleavage). This protein specifically catalyzes the removal of signal peptides from prolipoproteins. The protein is Lipoprotein signal peptidase of Blochmanniella pennsylvanica (strain BPEN).